The primary structure comprises 348 residues: Histidinol-phosphate aminotransferase (348 aa).

An N6-(pyridoxal phosphate)lysine modification is found at Lys-211.

This sequence belongs to the class-II pyridoxal-phosphate-dependent aminotransferase family. Histidinol-phosphate aminotransferase subfamily. Homodimer. Requires pyridoxal 5'-phosphate as cofactor.

It catalyses the reaction L-histidinol phosphate + 2-oxoglutarate = 3-(imidazol-4-yl)-2-oxopropyl phosphate + L-glutamate. The protein operates within amino-acid biosynthesis; L-histidine biosynthesis; L-histidine from 5-phospho-alpha-D-ribose 1-diphosphate: step 7/9. This Chlorobaculum tepidum (strain ATCC 49652 / DSM 12025 / NBRC 103806 / TLS) (Chlorobium tepidum) protein is Histidinol-phosphate aminotransferase.